Consider the following 70-residue polypeptide: Putative antitoxin VapB34 (70 aa).

Functionally, antitoxin component of a possible type II toxin-antitoxin (TA) system. The cognate toxin is VapC34. This is Putative antitoxin VapB34 (vapB34) from Mycobacterium tuberculosis (strain CDC 1551 / Oshkosh).